Consider the following 252-residue polypeptide: Serine/threonine phosphatase stp (252 aa).

Basic and acidic residues predominate over residues 1–18 (MHAEFRTDRGRIRHHNED). Residues 1 to 23 (MHAEFRTDRGRIRHHNEDNGGVF) are disordered. A PPM-type phosphatase domain is found at 2 to 242 (HAEFRTDRGR…DNITVLLVER (241 aa)). Residues Asp36, Gly37, Asp194, and Asp233 each contribute to the Mn(2+) site.

The protein belongs to the PP2C family. The cofactor is Mn(2+).

Its subcellular location is the cytoplasm. It localises to the membrane. The catalysed reaction is O-phospho-L-seryl-[protein] + H2O = L-seryl-[protein] + phosphate. The enzyme catalyses O-phospho-L-threonyl-[protein] + H2O = L-threonyl-[protein] + phosphate. Protein phosphatase that dephosphorylates EF-Tu. The polypeptide is Serine/threonine phosphatase stp (stp) (Listeria monocytogenes serotype 4b (strain F2365)).